The sequence spans 113 residues: Small ribosomal subunit protein bS6 (113 aa).

The protein belongs to the bacterial ribosomal protein bS6 family.

In terms of biological role, binds together with bS18 to 16S ribosomal RNA. In Flavobacterium johnsoniae (strain ATCC 17061 / DSM 2064 / JCM 8514 / BCRC 14874 / CCUG 350202 / NBRC 14942 / NCIMB 11054 / UW101) (Cytophaga johnsonae), this protein is Small ribosomal subunit protein bS6.